Reading from the N-terminus, the 257-residue chain is UPF0246 protein LPC_0782 (257 aa).

It belongs to the UPF0246 family.

This Legionella pneumophila (strain Corby) protein is UPF0246 protein LPC_0782.